The primary structure comprises 359 residues: GTP 3',8-cyclase (359 aa).

The 228-residue stretch at 33 to 260 (RFGRRHDSLR…PTGRENPSAP (228 aa)) folds into the Radical SAM core domain. R42 contributes to the GTP binding site. 2 residues coordinate [4Fe-4S] cluster: C49 and C53. Y55 contacts S-adenosyl-L-methionine. C56 provides a ligand contact to [4Fe-4S] cluster. A GTP-binding site is contributed by R93. G97 lines the S-adenosyl-L-methionine pocket. T124 contributes to the GTP binding site. S148 lines the S-adenosyl-L-methionine pocket. Position 185 (K185) interacts with GTP. M219 is an S-adenosyl-L-methionine binding site. Residues C286 and C289 each contribute to the [4Fe-4S] cluster site. Residue 291 to 293 (RLR) coordinates GTP. Residue C303 participates in [4Fe-4S] cluster binding.

Belongs to the radical SAM superfamily. MoaA family. Monomer and homodimer. It depends on [4Fe-4S] cluster as a cofactor.

The catalysed reaction is GTP + AH2 + S-adenosyl-L-methionine = (8S)-3',8-cyclo-7,8-dihydroguanosine 5'-triphosphate + 5'-deoxyadenosine + L-methionine + A + H(+). Its pathway is cofactor biosynthesis; molybdopterin biosynthesis. Its function is as follows. Catalyzes the cyclization of GTP to (8S)-3',8-cyclo-7,8-dihydroguanosine 5'-triphosphate. This chain is GTP 3',8-cyclase, found in Rhodopirellula baltica (strain DSM 10527 / NCIMB 13988 / SH1).